An 88-amino-acid polypeptide reads, in one-letter code: Small ribosomal subunit protein bS20 (88 aa).

The disordered stretch occupies residues 1-27 (MANSKTAKKRAIQSEKRRQHNASRRSM).

This sequence belongs to the bacterial ribosomal protein bS20 family.

In terms of biological role, binds directly to 16S ribosomal RNA. In Shewanella amazonensis (strain ATCC BAA-1098 / SB2B), this protein is Small ribosomal subunit protein bS20.